Here is a 320-residue protein sequence, read N- to C-terminus: MIACRMSSQDLSISAKLINGGIAGLVGVTCVFPIDLAKTRLQNQQGKDVYRGMTDCLMKTARAEGFLGMYRGAAVNLTLVTPEKAIKLAANDFLRQLLMQDGTQRNLKMEMLAGCGAGICQVVITCPMEMLKIQLQDAGRLAVCHQASASATPTSRPYSTGSTSTHRRPSATLIARELLRTQGLSGLYRGLGATLLRDIPFSIIYFPLFANLNQLGVSELTGKASFTHSFVAGCTAGSVAAVAVTPLDVLKTRIQTLKKGLGEDTYSGVTDCARKLWTQEGPAAFMKGAGCRALVIAPLFGIAQGVYFIGIGERILKCFE.

3 Solcar repeats span residues 11 to 97 (LSIS…LRQL), 105 to 215 (RNLK…LNQL), and 224 to 313 (ASFT…GIGE). 3 helical membrane-spanning segments follow: residues 17–37 (LING…IDLA), 66–86 (FLGM…EKAI), and 110–128 (EMLA…TCPM). The residue at position 150 (Ser150) is a Phosphoserine. 3 helical membrane-spanning segments follow: residues 190–210 (GLGA…PLFA), 230–250 (FVAG…LDVL), and 293–313 (ALVI…GIGE).

The protein belongs to the mitochondrial carrier (TC 2.A.29) family.

The protein localises to the mitochondrion inner membrane. It carries out the reaction L-glutamate(in) + H(+)(in) = L-glutamate(out) + H(+)(out). Its function is as follows. Responsible for the transport of glutamate from the cytosol into the mitochondrial matrix with the concomitant import of a proton (symport system). The protein is Mitochondrial glutamate carrier 2 (Slc25a18) of Mus musculus (Mouse).